The following is a 581-amino-acid chain: MGFFDLSIPYNEPPRSGGKEIAGGKTLRLKLATKAMELGYVGIAHNRSIKGVMSDKDSCTIPLLTLGSLIKVAPRLASSVGFHRDLLGVPRTTPFRQYTRLTVHVESNAQCQSLNSGNPILKSYDIIAVRPMNQNAFDYACEKAEVDLISIDFTDKMLFRLKHPMVKAAIQRGIYFEIKYSDILMDAQTRRQVISNAKLLVDWTRGKNLIISSGAPSVTELRGPNDVINLMFLLGLSAERARAAISKNCRNMIAKVLKKKRFHKEAVRVELLSAGDTFSLEQPLSEDCMKWDRLSSGEGDMLLDDLAKAFDATNVVAHKSSKAIDFTSVLDGLPKHGFRVKDIVGTESVTQPSAAKVIDTQVHSSNQVSELRMATASSDDNLREIETISQIDMLMSEDDNKVEPTTNVLKEEAFALRKCSASHGQGILVQNQTATPFTLTRCTKSEAASDVSMNIESTSEGGSMSPSKSDHGIPQSPVEVNNMGNAAFEEEASVDENSKERATTGHASNDEMHITESGHHASIDDEKHIPEPEHLTSIADEMKIDCSSEANHDEYMEVTMEDQMHETVQMRLCKTMTKHQD.

A compositionally biased stretch (polar residues) spans 452 to 467 (SMNIESTSEGGSMSPS). Residues 452-512 (SMNIESTSEG…TTGHASNDEM (61 aa)) are disordered. A compositionally biased stretch (basic and acidic residues) spans 496-512 (ENSKERATTGHASNDEM).

This sequence belongs to the eukaryotic/archaeal RNase P protein component 3 family. In terms of assembly, probable component of nuclear RNase P and RNase MRP ribonucleoproteins. Interacts with POP5. As to expression, mostly expressed in inflorescence and roots, to a lower extent in leaves, and, at low levels, in siliques, seedlings and stems.

It localises to the nucleus. The protein localises to the nucleolus. It is found in the mitochondrion. Its function is as follows. Probable component of ribonuclease P, a ribonucleoprotein complex that generates mature tRNA molecules by cleaving their 5'-ends. May also be a component of the MRP ribonuclease complex, which cleaves pre-rRNA sequences. Required for female gametophyte development and male competence. This chain is Protein GAMETOPHYTE DEFECTIVE 1, found in Arabidopsis thaliana (Mouse-ear cress).